The primary structure comprises 413 residues: 3-oxo-tetronate kinase (413 aa).

Residues S254, 354-357 (GGET), and G397 contribute to the ATP site.

It belongs to the four-carbon acid sugar kinase family.

The catalysed reaction is 3-dehydro-L-erythronate + ATP = 3-dehydro-4-O-phospho-L-erythronate + ADP + H(+). It catalyses the reaction 3-dehydro-D-erythronate + ATP = 3-dehydro-4-O-phospho-D-erythronate + ADP + H(+). Catalyzes the ATP-dependent phosphorylation of 3-oxo-tetronate to 3-oxo-tetronate 4-phosphate. This chain is 3-oxo-tetronate kinase, found in Haemophilus influenzae (strain ATCC 51907 / DSM 11121 / KW20 / Rd).